Reading from the N-terminus, the 510-residue chain is NAD(P)H-quinone oxidoreductase subunit 2 A, chloroplastic (510 aa).

Helical transmembrane passes span Leu24–Leu44, Met57–Phe77, Ile99–Ile119, Met124–Cys144, Leu149–Tyr169, Tyr183–Gly203, Pro227–Ala247, Trp295–Ile315, Met323–Asp343, Tyr354–Leu374, Ala395–Phe415, Leu418–Leu438, and Leu482–Ile502.

The protein belongs to the complex I subunit 2 family. In terms of assembly, NDH is composed of at least 16 different subunits, 5 of which are encoded in the nucleus.

It localises to the plastid. The protein localises to the chloroplast thylakoid membrane. The catalysed reaction is a plastoquinone + NADH + (n+1) H(+)(in) = a plastoquinol + NAD(+) + n H(+)(out). It catalyses the reaction a plastoquinone + NADPH + (n+1) H(+)(in) = a plastoquinol + NADP(+) + n H(+)(out). In terms of biological role, NDH shuttles electrons from NAD(P)H:plastoquinone, via FMN and iron-sulfur (Fe-S) centers, to quinones in the photosynthetic chain and possibly in a chloroplast respiratory chain. The immediate electron acceptor for the enzyme in this species is believed to be plastoquinone. Couples the redox reaction to proton translocation, and thus conserves the redox energy in a proton gradient. This chain is NAD(P)H-quinone oxidoreductase subunit 2 A, chloroplastic, found in Populus trichocarpa (Western balsam poplar).